We begin with the raw amino-acid sequence, 236 residues long: MKKPLLLTLLCMILAGCDNPKSLESFTPEMASFSNEFDFDPLRGPVKDFSQTLMSENGEVAKQVTGTLSQEGCFDTLELHDLENNTGLALVLDANYYRDAQTLEKKVQLQGKCQLAALPSAGVTWETDDNGFVVSATGKEMKVEYRYDSEGYPVGKTTINSQNRLSVTAKPSANPRKKLDYTAVSRVDDRQVGNVTQSCEYDAYANPVDCRLVIVDESVKPAVSHHYTIKNRIDYY.

A signal peptide spans 1–16 (MKKPLLLTLLCMILAG). C17 carries the N-palmitoyl cysteine lipid modification. The S-diacylglycerol cysteine moiety is linked to residue C17.

It belongs to the UPF0257 family.

It is found in the cell membrane. In Salmonella heidelberg (strain SL476), this protein is UPF0257 lipoprotein YnfC.